The primary structure comprises 49 residues: Large ribosomal subunit protein bL33 (49 aa).

Belongs to the bacterial ribosomal protein bL33 family.

The chain is Large ribosomal subunit protein bL33 from Pelotomaculum thermopropionicum (strain DSM 13744 / JCM 10971 / SI).